Consider the following 308-residue polypeptide: CD276 antigen homolog (308 aa).

An N-terminal signal peptide occupies residues 1 to 15 (MAALCLLLLLSLAEA). The Extracellular segment spans residues 16-236 (IDLRVPELPV…VTGQHLSFPP (221 aa)). The region spanning 21-125 (PELPVIGLLD…VQNSSSASVS (105 aa)) is the Ig-like V-type domain. Cystine bridges form between C37/C112 and C155/C210. In terms of domain architecture, Ig-like C2-type spans 135 to 228 (PTLHLEPSEA…DVTHASLTVT (94 aa)). A helical transmembrane segment spans residues 237-257 (LVLWVTVGLSICLLCLLVALA). Over 258–308 (CVCRKHLKQTCEEEQENAGNEEHEENGELKTAMQPLKVTSPGEDDDAECLE) the chain is Cytoplasmic. The tract at residues 270-308 (EEQENAGNEEHEENGELKTAMQPLKVTSPGEDDDAECLE) is disordered. The span at 299 to 308 (GEDDDAECLE) shows a compositional bias: acidic residues.

It belongs to the immunoglobulin superfamily. BTN/MOG family.

It localises to the membrane. In terms of biological role, modulates immune responses. The protein is CD276 antigen homolog (cd276) of Xenopus laevis (African clawed frog).